Consider the following 376-residue polypeptide: Mitogen-activated protein kinase ERK-A (376 aa).

Positions tyrosine 38–leucine 326 constitute a Protein kinase domain. ATP is bound by residues isoleucine 44–valine 52 and lysine 67. Aspartate 162 serves as the catalytic Proton acceptor. Phosphothreonine is present on threonine 198. The short motif at threonine 198–tyrosine 200 is the TXY element. Tyrosine 200 carries the phosphotyrosine modification.

This sequence belongs to the protein kinase superfamily. CMGC Ser/Thr protein kinase family. MAP kinase subfamily. Requires Mg(2+) as cofactor. Dually phosphorylated on Thr-198 and Tyr-200, which activates the enzyme. Phosphorylated on tyrosine residue(s) in response to insulin. In third instar larvae, expressed in eye imaginal disks. In adults, expressed in head and body.

It localises to the cytoplasm. The protein localises to the nucleus. It catalyses the reaction L-seryl-[protein] + ATP = O-phospho-L-seryl-[protein] + ADP + H(+). The catalysed reaction is L-threonyl-[protein] + ATP = O-phospho-L-threonyl-[protein] + ADP + H(+). With respect to regulation, activated by tyrosine and threonine phosphorylation. In terms of biological role, serine/threonine kinase which acts as an essential component of the MAP kinase signal transduction pathway to regulate proliferation, differentiation and effect cell fate decisions in various tissues. Required downstream of phl/Raf in the sev/sevenless, tor/torso, and EGF receptor homolog Egfr signal transduction pathways. Required for embryonic epithelial tissue repair. During larval development, mediates Ptth/tor signaling leading to the production of ecdysone, a hormone required for the initiation of metamorphosis. The chain is Mitogen-activated protein kinase ERK-A from Drosophila melanogaster (Fruit fly).